The following is a 121-amino-acid chain: Neuromedin-B (121 aa).

An N-terminal signal peptide occupies residues 1 to 24 (MTLRARGARLLGGLLFFTLLAAGA). M56 carries the post-translational modification Methionine amide. A propeptide spanning residues 60 to 121 (SLEPPNPSLL…RRLLVQTLEK (62 aa)) is cleaved from the precursor.

This sequence belongs to the bombesin/neuromedin-B/ranatensin family. Higher expression in the central nervous system (CNS) than in peripheral tissues. Highest levels are found in the olfactory bulb. Relatively high levels in the CNS (including the cerebral cortex, cerebellum, spinal cord, medulla oblongata, midbrain, hypothalamus, hippocampus, and hypophysis) and in peripheral tissues such as the pancreas, adrenal gland, testis, ovary and cecum. Moderate levels are found in the rectum, heart and pons with low expression levels detected in the bone marrow and duodenum. Other tissues show no or low levels of expression.

Its subcellular location is the secreted. The protein resides in the cell projection. It localises to the neuron projection. Stimulates smooth muscle contraction. Induces sighing by acting directly on the pre-Botzinger complex, a cluster of several thousand neurons in the ventrolateral medulla responsible for inspiration during respiratory activity. Contributes to the induction of sneezing following exposure to chemical irritants or allergens which causes release of NMB by nasal sensory neurons and activation of NMBR-expressing neurons in the sneeze-evoking region of the brainstem. These in turn activate neurons of the caudal ventral respiratory group, giving rise to the sneezing response. Contributes to induction of acute itch, possibly through activation of the NMBR receptor on dorsal root ganglion neurons. Increases expression of NMBR and steroidogenic mediators STAR, CYP11A1 and HSD3B1 in Leydig cells, induces secretion of testosterone by Leydig cells and also promotes Leydig cell proliferation. Plays a role in the innate immune response to influenza A virus infection by enhancing interferon alpha expression and reducing expression of IL6. Plays a role in CSF1-induced proliferation of osteoclast precursors by contributing to positive regulation of the expression of the CSF1 receptor CSF1R. The polypeptide is Neuromedin-B (NMB) (Sus scrofa (Pig)).